The primary structure comprises 485 residues: ATP synthase subunit beta (485 aa).

Positions 1-11 (MPATETADKNT) are enriched in basic and acidic residues. Positions 1–20 (MPATETADKNTKSANSDTSG) are disordered. An ATP-binding site is contributed by 170 to 177 (GGAGVGKT).

It belongs to the ATPase alpha/beta chains family. As to quaternary structure, F-type ATPases have 2 components, CF(1) - the catalytic core - and CF(0) - the membrane proton channel. CF(1) has five subunits: alpha(3), beta(3), gamma(1), delta(1), epsilon(1). CF(0) has three main subunits: a(1), b(2) and c(9-12). The alpha and beta chains form an alternating ring which encloses part of the gamma chain. CF(1) is attached to CF(0) by a central stalk formed by the gamma and epsilon chains, while a peripheral stalk is formed by the delta and b chains.

It is found in the cell membrane. The enzyme catalyses ATP + H2O + 4 H(+)(in) = ADP + phosphate + 5 H(+)(out). Functionally, produces ATP from ADP in the presence of a proton gradient across the membrane. The catalytic sites are hosted primarily by the beta subunits. In Mycobacterium avium (strain 104), this protein is ATP synthase subunit beta.